The primary structure comprises 160 residues: Large ribosomal subunit protein uL22c (160 aa).

Belongs to the universal ribosomal protein uL22 family. As to quaternary structure, part of the 50S ribosomal subunit.

The protein resides in the plastid. It is found in the chloroplast. In terms of biological role, this protein binds specifically to 23S rRNA. The globular domain of the protein is located near the polypeptide exit tunnel on the outside of the subunit, while an extended beta-hairpin is found that lines the wall of the exit tunnel in the center of the 70S ribosome. The chain is Large ribosomal subunit protein uL22c (rpl22) from Draba nemorosa (Woodland whitlowgrass).